The sequence spans 243 residues: UPF0502 protein Rmet_3697 (243 aa).

Over residues 1-11 (MTDTPDTPDTP) the composition is skewed to low complexity. Residues 1–23 (MTDTPDTPDTPMATGASSRPPLR) are disordered.

The protein belongs to the UPF0502 family.

This Cupriavidus metallidurans (strain ATCC 43123 / DSM 2839 / NBRC 102507 / CH34) (Ralstonia metallidurans) protein is UPF0502 protein Rmet_3697.